Reading from the N-terminus, the 804-residue chain is Phenylalanine--tRNA ligase beta subunit (804 aa).

The region spanning 40–155 (DRGMKGVVIG…SDAPIGADAI (116 aa)) is the tRNA-binding domain. In terms of domain architecture, B5 spans 409-484 (QDSVVVTVTL…RLYGYDRLPA (76 aa)). Residues aspartate 462, aspartate 468, glutamate 471, and glutamate 472 each contribute to the Mg(2+) site. The FDX-ACB domain maps to 710–803 (PRFPSVVRDI…VEKQFGAVLR (94 aa)).

Belongs to the phenylalanyl-tRNA synthetase beta subunit family. Type 1 subfamily. Tetramer of two alpha and two beta subunits. The cofactor is Mg(2+).

Its subcellular location is the cytoplasm. It catalyses the reaction tRNA(Phe) + L-phenylalanine + ATP = L-phenylalanyl-tRNA(Phe) + AMP + diphosphate + H(+). This is Phenylalanine--tRNA ligase beta subunit from Geobacillus kaustophilus (strain HTA426).